The chain runs to 355 residues: Elongation factor Ts (355 aa).

An involved in Mg(2+) ion dislocation from EF-Tu region spans residues 82–85; that stretch reads TDFV.

The protein belongs to the EF-Ts family.

The protein resides in the cytoplasm. Associates with the EF-Tu.GDP complex and induces the exchange of GDP to GTP. It remains bound to the aminoacyl-tRNA.EF-Tu.GTP complex up to the GTP hydrolysis stage on the ribosome. This chain is Elongation factor Ts (tsf), found in Helicobacter pylori (strain J99 / ATCC 700824) (Campylobacter pylori J99).